The following is a 441-amino-acid chain: MMKSILALVLGTLSFAALADDQANDALVKRGEYLARAGDCVACHSVKGGQPFAGGLPMATPIGTIYSTNITPDKTTGIGDYSYDDFQKAVRHGVAKNGDTLYPAMPYPSYAVVSDEDMKALYAYFMHGVAPVAQANKDSDIPWPLSMRWPLAIWRGVFAPDVKAFQPAAQEDPVLARGRYLVEGLGHCGACHTPRSITMQEKALSNDGAHDYLSGSSAPIDGWTASNLRGDNRDGLGRWSEDDLRQFLRYGRNDHTAAFGGMTDVVEHSLQHLSDDDITAIARYLKSLGAKDASQTVFTQDDQVAKALWKGDDSQTGASVYVDSCAACHKTDGSRLSALLPGAAWQPGGAGEPDPTSLIHIVLTGGTLPGVQGAPTAITMPAFGWRLNDQQVADVVNFIRGSWGNGAKATVTAKDVASLRKDETVQAHQGNADIKVLEQQQ.

A signal peptide spans 1–19 (MMKSILALVLGTLSFAALA). 3 Cytochrome c domains span residues 26–129 (ALVK…MHGV), 173–289 (PVLA…KSLG), and 312–403 (DDSQ…RGSW). Positions 40, 43, 44, 188, 191, 192, 325, 328, and 329 each coordinate heme c.

As to quaternary structure, heterotrimer. The cofactor is FAD. In terms of processing, binds 3 heme c groupd covalently per subunit.

The protein localises to the cell membrane. The catalysed reaction is D-gluconate + A = 2-dehydro-D-gluconate + AH2. Functionally, part of the heterotrimer that catalyzes the conversion of D-gluconate to 2-dehydro-D-gluconate. The polypeptide is Gluconate 2-dehydrogenase cytochrome c subunit (Pantoea cypripedii (Pectobacterium cypripedii)).